We begin with the raw amino-acid sequence, 276 residues long: Dermonecrotic toxin LdSicTox-alphaIB2 (276 aa).

His5 is a catalytic residue. Mg(2+) is bound by residues Glu25 and Asp27. The Nucleophile role is filled by His41. 2 disulfides stabilise this stretch: Cys45–Cys51 and Cys47–Cys190. Residue Asp85 participates in Mg(2+) binding. Asn253 carries N-linked (GlcNAc...) asparagine glycosylation.

Belongs to the arthropod phospholipase D family. Class II subfamily. Requires Mg(2+) as cofactor. Expressed by the venom gland.

Its subcellular location is the secreted. It carries out the reaction an N-(acyl)-sphingosylphosphocholine = an N-(acyl)-sphingosyl-1,3-cyclic phosphate + choline. The enzyme catalyses an N-(acyl)-sphingosylphosphoethanolamine = an N-(acyl)-sphingosyl-1,3-cyclic phosphate + ethanolamine. It catalyses the reaction a 1-acyl-sn-glycero-3-phosphocholine = a 1-acyl-sn-glycero-2,3-cyclic phosphate + choline. The catalysed reaction is a 1-acyl-sn-glycero-3-phosphoethanolamine = a 1-acyl-sn-glycero-2,3-cyclic phosphate + ethanolamine. In terms of biological role, dermonecrotic toxins cleave the phosphodiester linkage between the phosphate and headgroup of certain phospholipids (sphingolipid and lysolipid substrates), forming an alcohol (often choline) and a cyclic phosphate. This toxin acts on sphingomyelin (SM). It may also act on ceramide phosphoethanolamine (CPE), lysophosphatidylcholine (LPC) and lysophosphatidylethanolamine (LPE), but not on lysophosphatidylserine (LPS), and lysophosphatidylglycerol (LPG). It acts by transphosphatidylation, releasing exclusively cyclic phosphate products as second products. Induces dermonecrosis, hemolysis, increased vascular permeability, edema, inflammatory response, and platelet aggregation. In Loxosceles deserta (Desert recluse spider), this protein is Dermonecrotic toxin LdSicTox-alphaIB2.